We begin with the raw amino-acid sequence, 264 residues long: Glutamate racemase (264 aa).

Substrate is bound by residues 10–11 (DS) and 42–43 (YG). The active-site Proton donor/acceptor is C73. Residue 74–75 (NT) coordinates substrate. Catalysis depends on C183, which acts as the Proton donor/acceptor. 184–185 (TH) serves as a coordination point for substrate.

This sequence belongs to the aspartate/glutamate racemases family.

The enzyme catalyses L-glutamate = D-glutamate. The protein operates within cell wall biogenesis; peptidoglycan biosynthesis. Its function is as follows. Provides the (R)-glutamate required for cell wall biosynthesis. This Streptococcus uberis (strain ATCC BAA-854 / 0140J) protein is Glutamate racemase.